The following is a 169-amino-acid chain: MEKLAELGINIPSFIAQVVNFGLLLGLLYLFAYKPILAKLDERSARIKESMERTDQVKEQAQRAEEEFKKKIGEASQQGQLVIERAVKTGDEIRQKAIEEARAEAEAMLSRARTEIRQERDEVVDQLRKEFAELTILAAGKVIDQSLDKKAHQALIDSVLENSTNLRKN.

A helical membrane pass occupies residues 11 to 31 (IPSFIAQVVNFGLLLGLLYLF).

Belongs to the ATPase B chain family. In terms of assembly, F-type ATPases have 2 components, F(1) - the catalytic core - and F(0) - the membrane proton channel. F(1) has five subunits: alpha(3), beta(3), gamma(1), delta(1), epsilon(1). F(0) has three main subunits: a(1), b(2) and c(10-14). The alpha and beta chains form an alternating ring which encloses part of the gamma chain. F(1) is attached to F(0) by a central stalk formed by the gamma and epsilon chains, while a peripheral stalk is formed by the delta and b chains.

It is found in the cell membrane. F(1)F(0) ATP synthase produces ATP from ADP in the presence of a proton or sodium gradient. F-type ATPases consist of two structural domains, F(1) containing the extramembraneous catalytic core and F(0) containing the membrane proton channel, linked together by a central stalk and a peripheral stalk. During catalysis, ATP synthesis in the catalytic domain of F(1) is coupled via a rotary mechanism of the central stalk subunits to proton translocation. In terms of biological role, component of the F(0) channel, it forms part of the peripheral stalk, linking F(1) to F(0). This Dehalococcoides mccartyi (strain ATCC BAA-2266 / KCTC 15142 / 195) (Dehalococcoides ethenogenes (strain 195)) protein is ATP synthase subunit b.